The sequence spans 263 residues: Small ribosomal subunit protein eS4 (263 aa).

Residues 42-104 form the S4 RNA-binding domain; it reads LPLIIFLRNR…TGENFRLIYD (63 aa).

The protein belongs to the eukaryotic ribosomal protein eS4 family.

The chain is Small ribosomal subunit protein eS4 (RPS4) from Cricetulus griseus (Chinese hamster).